Reading from the N-terminus, the 274-residue chain is Protein YehF (274 aa).

One can recognise a WGR domain in the interval 2–78 (RHFIYQDEKS…KDNSLQPSQT (77 aa)).

In terms of biological role, has been implicated in selenate reduction; a mini-Tn10 insertion mutant in 'molR', (which was mapped to 47.3 centisomes i.e. this locus), is defective in the reduction of selenate. This chain is Protein YehF (yehF), found in Escherichia coli (strain K12).